The following is a 162-amino-acid chain: Protein FAM167B (162 aa).

Belongs to the FAM167 (SEC) family.

The chain is Protein FAM167B (Fam167b) from Mus musculus (Mouse).